A 200-amino-acid chain; its full sequence is Outer-membrane lipoprotein carrier protein (200 aa).

The first 18 residues, 1-18 (MIGLFLAAPLVLSSAVWA), serve as a signal peptide directing secretion.

This sequence belongs to the LolA family. In terms of assembly, monomer.

It is found in the periplasm. In terms of biological role, participates in the translocation of lipoproteins from the inner membrane to the outer membrane. Only forms a complex with a lipoprotein if the residue after the N-terminal Cys is not an aspartate (The Asp acts as a targeting signal to indicate that the lipoprotein should stay in the inner membrane). The chain is Outer-membrane lipoprotein carrier protein from Photobacterium profundum (strain SS9).